The sequence spans 420 residues: D-tagatose-1,6-bisphosphate aldolase subunit GatZ (420 aa).

This sequence belongs to the GatZ/KbaZ family. GatZ subfamily. As to quaternary structure, forms a complex with GatY.

Its pathway is carbohydrate metabolism; D-tagatose 6-phosphate degradation; D-glyceraldehyde 3-phosphate and glycerone phosphate from D-tagatose 6-phosphate: step 2/2. Component of the tagatose-1,6-bisphosphate aldolase GatYZ that is required for full activity and stability of the Y subunit. Could have a chaperone-like function for the proper and stable folding of GatY. When expressed alone, GatZ does not show any aldolase activity. Is involved in the catabolism of galactitol. In Escherichia coli O139:H28 (strain E24377A / ETEC), this protein is D-tagatose-1,6-bisphosphate aldolase subunit GatZ.